A 205-amino-acid polypeptide reads, in one-letter code: LexA repressor (205 aa).

The segment at residues 28-48 (RAEIARRLGFKSANAAEEHLK) is a DNA-binding region (H-T-H motif). Catalysis depends on for autocatalytic cleavage activity residues S122 and K159.

The protein belongs to the peptidase S24 family. In terms of assembly, homodimer.

It carries out the reaction Hydrolysis of Ala-|-Gly bond in repressor LexA.. Represses a number of genes involved in the response to DNA damage (SOS response), including recA and lexA. In the presence of single-stranded DNA, RecA interacts with LexA causing an autocatalytic cleavage which disrupts the DNA-binding part of LexA, leading to derepression of the SOS regulon and eventually DNA repair. The sequence is that of LexA repressor from Shewanella loihica (strain ATCC BAA-1088 / PV-4).